Reading from the N-terminus, the 137-residue chain is Histone H2B (137 aa).

Over residues 1 to 10 the composition is skewed to basic and acidic residues; sequence MPPKPADKKP. The segment at 1–45 is disordered; that stretch reads MPPKPADKKPASKAPATASKAPEKKDAGKKTAASGDKKKRTKARK. 2 positions are modified to N6-acetyllysine; alternate: K8 and K9. Glycyl lysine isopeptide (Lys-Gly) (interchain with G-Cter in SUMO); alternate cross-links involve residues K8 and K9. S12 is modified (phosphoserine). Position 13 is an N6-acetyllysine (K13). K24 carries the N6-acetyllysine; alternate modification. K24 is covalently cross-linked (Glycyl lysine isopeptide (Lys-Gly) (interchain with G-Cter in SUMO); alternate). Residue K25 forms a Glycyl lysine isopeptide (Lys-Gly) (interchain with G-Cter in SUMO) linkage. K131 participates in a covalent cross-link: Glycyl lysine isopeptide (Lys-Gly) (interchain with G-Cter in ubiquitin).

Belongs to the histone H2B family. As to quaternary structure, the nucleosome is a histone octamer containing two molecules each of H2A, H2B, H3 and H4 assembled in one H3-H4 heterotetramer and two H2A-H2B heterodimers. The octamer wraps approximately 147 bp of DNA. Monoubiquitinated by the ubc-2-bre-1 complex to form H2BK123ub1. H2BK123ub1 gives a specific tag for epigenetic transcriptional activation and is also prerequisite for H3K4me and H3K79me formation. H2BK123ub1 also modulates the formation of double-strand breaks during meiosis and is a prerequisite for DNA-damage checkpoint activation. Post-translationally, phosphorylated by ste-20 to form H2BS10ph during progression through meiotic prophase. May be correlated with chromosome condensation. In terms of processing, acetylated by gcn-5 to form H2BK11ac and H2BK16ac. H2BK16ac can also be formed by esa-1. Acetylation of N-terminal lysines and particularly formation of H2BK11acK16ac has a positive effect on transcription. Sumoylation to form H2BK6su or H2BK7su, and probably also H2BK16su or H2BK17su, occurs preferentially near the telomeres and represses gene transcription.

Its subcellular location is the nucleus. The protein localises to the chromosome. Core component of nucleosome. Nucleosomes wrap and compact DNA into chromatin, limiting DNA accessibility to the cellular machineries which require DNA as a template. Histones thereby play a central role in transcription regulation, DNA repair, DNA replication and chromosomal stability. DNA accessibility is regulated via a complex set of post-translational modifications of histones, also called histone code, and nucleosome remodeling. The polypeptide is Histone H2B (hh2b) (Neurospora crassa (strain ATCC 24698 / 74-OR23-1A / CBS 708.71 / DSM 1257 / FGSC 987)).